A 328-amino-acid polypeptide reads, in one-letter code: Probable voltage-gated potassium channel subunit beta (328 aa).

Positions 21, 27, and 49 each coordinate NADP(+). The active-site Proton donor/acceptor is the Y54. Residues S152, Q178, W207, S208, P209, L210, A211, K218, R229, G285, T287, Q291, E294, and N295 each coordinate NADP(+).

This sequence belongs to the shaker potassium channel beta subunit family. Forms heteromultimeric complexes with potassium channel alpha subunits. In terms of tissue distribution, expressed in roots, leaves and flowers (at protein level).

In terms of biological role, probable accessory potassium channel protein which modulates the activity of the pore-forming alpha subunit. The chain is Probable voltage-gated potassium channel subunit beta (KAB1) from Arabidopsis thaliana (Mouse-ear cress).